A 187-amino-acid chain; its full sequence is Elongation factor P (187 aa).

It belongs to the elongation factor P family.

Its subcellular location is the cytoplasm. It participates in protein biosynthesis; polypeptide chain elongation. Functionally, involved in peptide bond synthesis. Stimulates efficient translation and peptide-bond synthesis on native or reconstituted 70S ribosomes in vitro. Probably functions indirectly by altering the affinity of the ribosome for aminoacyl-tRNA, thus increasing their reactivity as acceptors for peptidyl transferase. This Helicobacter pylori (strain G27) protein is Elongation factor P.